A 224-amino-acid chain; its full sequence is Glutathione peroxidase 3 (224 aa).

The N-terminal stretch at 1–18 (MAPGSVLSLAVALATIIG) is a signal peptide. An N-linked (GlcNAc...) asparagine glycan is attached at asparagine 38. Cysteine 73 is an active-site residue.

The protein belongs to the glutathione peroxidase family.

It localises to the secreted. The protein localises to the extracellular space. The enzyme catalyses 2 glutathione + H2O2 = glutathione disulfide + 2 H2O. The sequence is that of Glutathione peroxidase 3 (gpx-3) from Caenorhabditis elegans.